Reading from the N-terminus, the 170-residue chain is Small ribosomal subunit protein uS15 (170 aa).

Residues 1–10 (MARMHSRKKG) are compositionally biased toward basic residues. The segment at 1 to 20 (MARMHSRKKGSSGSRPPVVD) is disordered.

Belongs to the universal ribosomal protein uS15 family. Part of the 30S ribosomal subunit.

The protein is Small ribosomal subunit protein uS15 of Methanothrix thermoacetophila (strain DSM 6194 / JCM 14653 / NBRC 101360 / PT) (Methanosaeta thermophila).